A 280-amino-acid chain; its full sequence is Ribonuclease Z (280 aa).

Positions 61, 63, 65, 66, 153, 176, and 240 each coordinate Zn(2+). D65 functions as the Proton acceptor in the catalytic mechanism.

It belongs to the RNase Z family. Homodimer. Zn(2+) serves as cofactor.

It carries out the reaction Endonucleolytic cleavage of RNA, removing extra 3' nucleotides from tRNA precursor, generating 3' termini of tRNAs. A 3'-hydroxy group is left at the tRNA terminus and a 5'-phosphoryl group is left at the trailer molecule.. Its function is as follows. Zinc phosphodiesterase, which displays some tRNA 3'-processing endonuclease activity. Probably involved in tRNA maturation, by removing a 3'-trailer from precursor tRNA. The chain is Ribonuclease Z from Mycolicibacterium paratuberculosis (strain ATCC BAA-968 / K-10) (Mycobacterium paratuberculosis).